Here is an 878-residue protein sequence, read N- to C-terminus: Aconitate hydratase A (878 aa).

[4Fe-4S] cluster-binding residues include C426, C492, and C495.

This sequence belongs to the aconitase/IPM isomerase family. As to quaternary structure, monomer. [4Fe-4S] cluster serves as cofactor.

The enzyme catalyses citrate = D-threo-isocitrate. It catalyses the reaction (2S,3R)-3-hydroxybutane-1,2,3-tricarboxylate = 2-methyl-cis-aconitate + H2O. Its pathway is carbohydrate metabolism; tricarboxylic acid cycle; isocitrate from oxaloacetate: step 2/2. It functions in the pathway organic acid metabolism; propanoate degradation. Functionally, involved in the catabolism of short chain fatty acids (SCFA) via the tricarboxylic acid (TCA)(acetyl degradation route) and probably the 2-methylcitrate cycle I (propionate degradation route). Catalyzes the reversible isomerization of citrate to isocitrate via cis-aconitate. Could catalyze the hydration of 2-methyl-cis-aconitate to yield (2R,3S)-2-methylisocitrate. The apo form of AcnA functions as a RNA-binding regulatory protein. In Rickettsia conorii (strain ATCC VR-613 / Malish 7), this protein is Aconitate hydratase A (acnA).